The chain runs to 277 residues: Diaminopimelate epimerase (277 aa).

Asparagine 15 and asparagine 74 together coordinate substrate. The active-site Proton donor is the cysteine 83. Substrate-binding positions include 84–85 (GN), asparagine 159, asparagine 194, and 212–213 (ER). Cysteine 221 (proton acceptor) is an active-site residue. Residue 222–223 (GT) coordinates substrate.

The protein belongs to the diaminopimelate epimerase family. As to quaternary structure, homodimer.

Its subcellular location is the cytoplasm. It catalyses the reaction (2S,6S)-2,6-diaminopimelate = meso-2,6-diaminopimelate. It participates in amino-acid biosynthesis; L-lysine biosynthesis via DAP pathway; DL-2,6-diaminopimelate from LL-2,6-diaminopimelate: step 1/1. Functionally, catalyzes the stereoinversion of LL-2,6-diaminopimelate (L,L-DAP) to meso-diaminopimelate (meso-DAP), a precursor of L-lysine and an essential component of the bacterial peptidoglycan. Involved in the succinylase branch of the diaminopimelate biosynthesis. This chain is Diaminopimelate epimerase, found in Corynebacterium glutamicum (strain ATCC 13032 / DSM 20300 / JCM 1318 / BCRC 11384 / CCUG 27702 / LMG 3730 / NBRC 12168 / NCIMB 10025 / NRRL B-2784 / 534).